Reading from the N-terminus, the 485-residue chain is D-alanine--D-alanyl carrier protein ligase (485 aa).

T144–S145 is a binding site for ATP. Residue D189 participates in D-alanine binding. N284–T289 serves as a coordination point for ATP. V293 serves as a coordination point for D-alanine. The ATP site is built by D365 and K473. Position 473 (K473) interacts with D-alanine.

The protein belongs to the ATP-dependent AMP-binding enzyme family. DltA subfamily.

Its subcellular location is the cytoplasm. It catalyses the reaction holo-[D-alanyl-carrier protein] + D-alanine + ATP = D-alanyl-[D-alanyl-carrier protein] + AMP + diphosphate. Its pathway is cell wall biogenesis; lipoteichoic acid biosynthesis. In terms of biological role, catalyzes the first step in the D-alanylation of lipoteichoic acid (LTA), the activation of D-alanine and its transfer onto the D-alanyl carrier protein (Dcp) DltC. In an ATP-dependent two-step reaction, forms a high energy D-alanyl-AMP intermediate, followed by transfer of the D-alanyl residue as a thiol ester to the phosphopantheinyl prosthetic group of the Dcp. D-alanylation of LTA plays an important role in modulating the properties of the cell wall in Gram-positive bacteria, influencing the net charge of the cell wall. The polypeptide is D-alanine--D-alanyl carrier protein ligase (Staphylococcus epidermidis (strain ATCC 35984 / DSM 28319 / BCRC 17069 / CCUG 31568 / BM 3577 / RP62A)).